Here is a 537-residue protein sequence, read N- to C-terminus: Pentatricopeptide repeat-containing protein At1g02370, mitochondrial (537 aa).

The transit peptide at 1-18 directs the protein to the mitochondrion; that stretch reads MNFRNLIASGSRLGKRFC. PPR repeat units follow at residues 171-205, 206-240, 241-275, 277-307, 312-346, 347-377, and 382-416; these read HQST…NFVN, NSLP…GISP, CGVT…SEAK, TWNT…MEEK, NRDS…RPEV, NNLS…WESK, and DMRL…SKGP.

The protein belongs to the PPR family. P subfamily.

The protein localises to the mitochondrion. This Arabidopsis thaliana (Mouse-ear cress) protein is Pentatricopeptide repeat-containing protein At1g02370, mitochondrial.